We begin with the raw amino-acid sequence, 500 residues long: ATP synthase subunit alpha (500 aa).

169 to 176 lines the ATP pocket; the sequence is GDRQTGKT.

Belongs to the ATPase alpha/beta chains family. As to quaternary structure, F-type ATPases have 2 components, CF(1) - the catalytic core - and CF(0) - the membrane proton channel. CF(1) has five subunits: alpha(3), beta(3), gamma(1), delta(1), epsilon(1). CF(0) has three main subunits: a(1), b(2) and c(9-12). The alpha and beta chains form an alternating ring which encloses part of the gamma chain. CF(1) is attached to CF(0) by a central stalk formed by the gamma and epsilon chains, while a peripheral stalk is formed by the delta and b chains.

The protein localises to the cell membrane. It carries out the reaction ATP + H2O + 4 H(+)(in) = ADP + phosphate + 5 H(+)(out). Produces ATP from ADP in the presence of a proton gradient across the membrane. The alpha chain is a regulatory subunit. The chain is ATP synthase subunit alpha from Lactococcus lactis subsp. cremoris (strain MG1363).